The sequence spans 93 residues: Small ribosomal subunit protein bS20c (93 aa).

The protein belongs to the bacterial ribosomal protein bS20 family.

The protein localises to the plastid. The protein resides in the chloroplast. Its function is as follows. Binds directly to 16S ribosomal RNA. This chain is Small ribosomal subunit protein bS20c, found in Trieres chinensis (Marine centric diatom).